Here is a 273-residue protein sequence, read N- to C-terminus: ComE operon protein 4 (273 aa).

It belongs to the pyrroline-5-carboxylate reductase family.

Its function is as follows. Dispensable for transformability. Not known if it can act as a pyrroline-5-carboxylate reductase. In Bacillus subtilis (strain 168), this protein is ComE operon protein 4 (comER).